The sequence spans 479 residues: Isoprimeverose transporter (479 aa).

The next 11 membrane-spanning stretches (helical) occupy residues 54 to 74, 102 to 122, 131 to 151, 174 to 194, 205 to 225, 253 to 273, 289 to 309, 321 to 341, 348 to 368, 397 to 417, and 431 to 451; these read MFFY…LFLV, PYWL…FTVP, VWAY…NIPI, FMGT…VAYF, WFMV…IVFA, WPWV…QTRS, LASF…ITPW, LMGM…SKAL, VGTI…AVML, FGMG…GYVA, and MNYV…LLFY.

It belongs to the sodium:galactoside symporter (TC 2.A.2) family.

The protein localises to the cell membrane. Its function is as follows. Involved in the metabolism of isoprimeverose. Transports isoprimeverose into the cell. Transport is driven by the proton motive force generated by malolactic fermentation. Cannot transport D-xylose. The chain is Isoprimeverose transporter from Lactiplantibacillus pentosus (Lactobacillus pentosus).